We begin with the raw amino-acid sequence, 728 residues long: Elongation factor 2 (728 aa).

A tr-type G domain is found at 19–261 (EQIRNIAIAA…MVAEHFPNPI (243 aa)). GTP-binding positions include 28–35 (AHVDHGKT), 94–98 (DTPGH), and 148–151 (NKVD). The residue at position 596 (H596) is a Diphthamide.

This sequence belongs to the TRAFAC class translation factor GTPase superfamily. Classic translation factor GTPase family. EF-G/EF-2 subfamily.

It localises to the cytoplasm. Its function is as follows. Catalyzes the GTP-dependent ribosomal translocation step during translation elongation. During this step, the ribosome changes from the pre-translocational (PRE) to the post-translocational (POST) state as the newly formed A-site-bound peptidyl-tRNA and P-site-bound deacylated tRNA move to the P and E sites, respectively. Catalyzes the coordinated movement of the two tRNA molecules, the mRNA and conformational changes in the ribosome. This is Elongation factor 2 from Halobacterium salinarum (strain ATCC 29341 / DSM 671 / R1).